The following is a 169-amino-acid chain: Chorismate pyruvate-lyase (169 aa).

4 residues coordinate substrate: Met-37, Arg-79, Leu-117, and Glu-158.

Belongs to the UbiC family. As to quaternary structure, monomer.

The protein localises to the cytoplasm. It carries out the reaction chorismate = 4-hydroxybenzoate + pyruvate. It participates in cofactor biosynthesis; ubiquinone biosynthesis. Functionally, removes the pyruvyl group from chorismate, with concomitant aromatization of the ring, to provide 4-hydroxybenzoate (4HB) for the ubiquinone pathway. The polypeptide is Chorismate pyruvate-lyase (Proteus mirabilis (strain HI4320)).